The primary structure comprises 626 residues: Chaperone protein HtpG (626 aa).

Residues 1–339 (MSQNQETRGF…SNDLPLNVSR (339 aa)) form an a; substrate-binding region. Positions 340–555 (EILQDNKITA…NDQMTTQMAK (216 aa)) are b. A c region spans residues 556–626 (LFAAAGQPVP…FIKRINKLLG (71 aa)).

It belongs to the heat shock protein 90 family. In terms of assembly, homodimer.

Its subcellular location is the cytoplasm. Its function is as follows. Molecular chaperone. Has ATPase activity. The sequence is that of Chaperone protein HtpG from Haemophilus influenzae (strain ATCC 51907 / DSM 11121 / KW20 / Rd).